The following is a 930-amino-acid chain: SCY1-like protein 2 (930 aa).

One can recognise a Protein kinase domain in the interval 32-327 (FDVGRHIASG…ADQMTKIPFF (296 aa)). Residues 443–479 (DEIKNSVLPMVYRALEAPSIQIQELCLNIIPTFANLI) form an HEAT repeat. Residues Ser-658 and Ser-677 each carry the phosphoserine modification. The interval 658–706 (SGSESENREDGMQGKQKRGSLTLEEKQKLAKEQEQAQKLKSQQPLKPQV) is disordered. Over residues 680-694 (LEEKQKLAKEQEQAQ) the composition is skewed to basic and acidic residues. The span at 695–705 (KLKSQQPLKPQ) shows a compositional bias: low complexity. Position 708 is a phosphothreonine (Thr-708). Positions 895–930 (GMQGNPFFNPQNFAQPPPTTMTSSSSASNDLKDLFG) are disordered. Positions 897–922 (QGNPFFNPQNFAQPPPTTMTSSSSAS) are enriched in low complexity.

Belongs to the protein kinase superfamily. Interacts with clathrin and AP2B1; the interaction mediates the association with the AP-2 complex. In terms of processing, could autophosphorylate in presence of poly-L-lysine. Ubiquitously expressed.

It is found in the cytoplasmic vesicle. The protein resides in the clathrin-coated vesicle. The protein localises to the golgi apparatus. It localises to the trans-Golgi network membrane. Its subcellular location is the endosome membrane. Component of the AP2-containing clathrin coat that may regulate clathrin-dependent trafficking at plasma membrane, TGN and endosomal system. A possible serine/threonine-protein kinase toward the beta2-subunit of the plasma membrane adapter complex AP2 and other proteins in presence of poly-L-lysine has not been confirmed. By regulating the expression of excitatory receptors at synapses, plays an essential role in neuronal function and signaling and in brain development. This Mus musculus (Mouse) protein is SCY1-like protein 2.